Here is a 229-residue protein sequence, read N- to C-terminus: Putative N-acetylmannosamine-6-phosphate 2-epimerase (229 aa).

It belongs to the NanE family.

It carries out the reaction an N-acyl-D-glucosamine 6-phosphate = an N-acyl-D-mannosamine 6-phosphate. It functions in the pathway amino-sugar metabolism; N-acetylneuraminate degradation; D-fructose 6-phosphate from N-acetylneuraminate: step 3/5. Functionally, converts N-acetylmannosamine-6-phosphate (ManNAc-6-P) to N-acetylglucosamine-6-phosphate (GlcNAc-6-P). This is Putative N-acetylmannosamine-6-phosphate 2-epimerase from Haemophilus ducreyi (strain 35000HP / ATCC 700724).